Reading from the N-terminus, the 591-residue chain is Aspartate--tRNA ligase (591 aa).

L-aspartate is bound at residue glutamate 172. The aspartate stretch occupies residues 196–199 (QLFK). Residue arginine 218 participates in L-aspartate binding. Residues 218 to 220 (RDE) and glutamine 227 each bind ATP. L-aspartate is bound at residue histidine 449. Glutamate 483 is an ATP binding site. An L-aspartate-binding site is contributed by arginine 490. 535–538 (GLDR) lines the ATP pocket.

This sequence belongs to the class-II aminoacyl-tRNA synthetase family. Type 1 subfamily. In terms of assembly, homodimer.

It is found in the cytoplasm. The enzyme catalyses tRNA(Asp) + L-aspartate + ATP = L-aspartyl-tRNA(Asp) + AMP + diphosphate. In terms of biological role, catalyzes the attachment of L-aspartate to tRNA(Asp) in a two-step reaction: L-aspartate is first activated by ATP to form Asp-AMP and then transferred to the acceptor end of tRNA(Asp). This chain is Aspartate--tRNA ligase, found in Actinobacillus pleuropneumoniae serotype 5b (strain L20).